The chain runs to 135 residues: NADH-quinone oxidoreductase subunit K (135 aa).

The next 3 membrane-spanning stretches (helical) occupy residues 33–53 (VLGL…FAIG), 63–83 (FLFM…AFVV), and 95–115 (IMFI…LAIL).

Belongs to the complex I subunit 4L family. As to quaternary structure, NDH-1 is composed of 14 different subunits. Subunits NuoA, H, J, K, L, M, N constitute the membrane sector of the complex.

Its subcellular location is the cell inner membrane. The enzyme catalyses a quinone + NADH + 5 H(+)(in) = a quinol + NAD(+) + 4 H(+)(out). In terms of biological role, NDH-1 shuttles electrons from NADH, via FMN and iron-sulfur (Fe-S) centers, to quinones in the respiratory chain. The immediate electron acceptor for the enzyme in this species is believed to be ubiquinone. Couples the redox reaction to proton translocation (for every two electrons transferred, four hydrogen ions are translocated across the cytoplasmic membrane), and thus conserves the redox energy in a proton gradient. The polypeptide is NADH-quinone oxidoreductase subunit K (Psychrobacter arcticus (strain DSM 17307 / VKM B-2377 / 273-4)).